The following is a 738-amino-acid chain: Glycogen [starch] synthase, muscle (738 aa).

The residue at position 8 (serine 8) is a Phosphoserine; by AMPK and PKA. Serine 11 bears the Phosphoserine mark. Lysine 39 lines the UDP pocket. The UDP-alpha-D-glucose site is built by histidine 205 and arginine 211. 5 residues coordinate alpha-D-glucose 6-phosphate: histidine 291, glutamate 292, glutamine 294, histidine 297, and lysine 301. Arginine 331 is a UDP binding site. Position 331 (arginine 331) interacts with UDP-alpha-D-glucose. Residue serine 412 is modified to Phosphoserine. Histidine 501 lines the alpha-D-glucose 6-phosphate pocket. Glutamate 510, tryptophan 512, and glycine 513 together coordinate UDP-alpha-D-glucose. UDP is bound at residue threonine 515. Residues arginine 582 and arginine 586 each coordinate alpha-D-glucose 6-phosphate. The tract at residues 632–738 (QGYRYPRPAS…PTSSLGEERN (107 aa)) is disordered. Serine 641 is subject to Phosphoserine; by DYRK2, GSK3-alpha, GSK3-beta and PASK. Serine 645, serine 649, serine 652, serine 653, serine 657, and serine 672 each carry phosphoserine. Over residues 658-681 (EDEEEPRDGPLGEDSERYDEEEEA) the composition is skewed to acidic residues. A compositionally biased stretch (basic and acidic residues) spans 682–695 (AKDRRNIRAPEWPR). Residues serine 698, serine 709, and serine 711 each carry the phosphoserine modification. Low complexity predominate over residues 698–738 (SCSSSTGGSKRSNSVDTGPSSSLSTPTEPLSPTSSLGEERN). Phosphothreonine is present on residues threonine 722 and threonine 724. 2 positions are modified to phosphoserine: serine 728 and serine 732.

Belongs to the glycosyltransferase 3 family. As to quaternary structure, part of the GYS1-GYG1 complex, a heterooctamer composed of a tetramer of GYS1 and 2 dimers of GYG1, where each GYS1 protomer binds to one GYG1 subunit (via GYG1 C-terminus); the GYS1 tetramer may dissociate from GYG1 dimers to continue glycogen polymerization on its own. In terms of processing, primed phosphorylation at Ser-657 (site 5) by CSNK2A1 and CSNK2A2 is required for inhibitory phosphorylation at Ser-641 (site 3a), Ser-645 (site 3b), Ser-649 (site 3c) and Ser-653 (site 4) by GSK3A an GSK3B. Phosphorylated at Ser-641 by PASK, leading to inactivation; phosphorylation by PASK is inhibited by glycogen. Phosphorylated at Ser-641 by DYRK2, leading to inactivation. Dephosphorylation at Ser-641 and Ser-645 by PP1 activates the enzyme. Phosphorylation at Ser-8 by AMPK inactivates the enzyme activity.

The enzyme catalyses [(1-&gt;4)-alpha-D-glucosyl](n) + UDP-alpha-D-glucose = [(1-&gt;4)-alpha-D-glucosyl](n+1) + UDP + H(+). The protein operates within glycan biosynthesis; glycogen biosynthesis. Allosteric activation by glucose-6-phosphate. Phosphorylation reduces the activity towards UDP-glucose. When in the non-phosphorylated state, glycogen synthase does not require glucose-6-phosphate as an allosteric activator; when phosphorylated it does. In terms of biological role, glycogen synthase participates in the glycogen biosynthetic process along with glycogenin and glycogen branching enzyme. Extends the primer composed of a few glucose units formed by glycogenin by adding new glucose units to it. In this context, glycogen synthase transfers the glycosyl residue from UDP-Glc to the non-reducing end of alpha-1,4-glucan. The protein is Glycogen [starch] synthase, muscle (Gys1) of Mus musculus (Mouse).